The following is a 393-amino-acid chain: uncharacterized protein (393 aa).

Topologically, residues 1–17 (MVSKDQTSFNKRWTLGL) are cytoplasmic. A helical transmembrane segment spans residues 18–38 (LMLGLVIILWVLSSFLINLIF). Over 39–46 (EDDSYRKP) the chain is Vacuolar. The chain crosses the membrane as a helical span at residues 47–67 (FFITYTNTAAFIFYLFPTAKA). The Cytoplasmic portion of the chain corresponds to 68 to 132 (VVVNYKDTGR…LYETIKLSAE (65 aa)). The residue at position 93 (Ser93) is a Phosphoserine. A helical transmembrane segment spans residues 133-153 (FCILWFTANLVTNASLAFTSV). Residues 154–156 (ASQ) lie on the Vacuolar side of the membrane. A helical membrane pass occupies residues 157–176 (TILSTTSSFFTLFIGAICHV). Topologically, residues 177 to 182 (ESLSKS) are cytoplasmic. The chain crosses the membrane as a helical span at residues 183 to 200 (KVLGSFISFVGIIMVTKS). Residues 201-219 (DSHQRYQRHIADVSGDDND) are Vacuolar-facing. The helical transmembrane segment at 220–240 (AVQVLIGNLLALAGAVLYGVY) threads the bilayer. The Cytoplasmic portion of the chain corresponds to 241–257 (STLLKREVGDETRVNMK). The helical transmembrane segment at 258 to 278 (IFFGFVGLFNLLFLWPSLIVL) threads the bilayer. Residues 279–292 (DFFGWEPFSLPKDP) are Vacuolar-facing. A helical membrane pass occupies residues 293-313 (KVVVIIFVNCLITFVSDFCWA). Residues 314-321 (KAMLLTSP) are Cytoplasmic-facing. A helical membrane pass occupies residues 322 to 342 (LTVTVGLSITIPLAMFGDVIF). Topologically, residues 343 to 345 (KHK) are vacuolar. Residues 346 to 366 (TMSALYLFGATLILGSFFIIN) traverse the membrane as a helical segment. Residues 367 to 393 (KSSEEEHFENSITASNYESVEVPAANN) are Cytoplasmic-facing.

This sequence belongs to the TPT transporter family.

Its subcellular location is the vacuole membrane. This is an uncharacterized protein from Saccharomyces cerevisiae (strain ATCC 204508 / S288c) (Baker's yeast).